The sequence spans 187 residues: PsbQ-like protein 3, chloroplastic (187 aa).

Residues methionine 1–isoleucine 32 constitute a chloroplast transit peptide. The N-terminal 28 residues, aspartate 33–arginine 60, are a transit peptide targeting the thylakoid.

Belongs to the PsbQ family. In terms of assembly, subunit of the lumenal protuberance of the NDH complex.

The protein localises to the plastid. It is found in the chloroplast thylakoid membrane. In terms of biological role, required for both formation and activity of the chloroplast NAD(P)H dehydrogenase (NDH) complex. In Arabidopsis thaliana (Mouse-ear cress), this protein is PsbQ-like protein 3, chloroplastic (PQL3).